Reading from the N-terminus, the 859-residue chain is Leucine--tRNA ligase (859 aa).

The short motif at 42–52 (PYPSGRLHMGH) is the 'HIGH' region element. The 'KMSKS' region signature appears at 618 to 622 (KMSKS). Residue K621 coordinates ATP.

This sequence belongs to the class-I aminoacyl-tRNA synthetase family.

The protein localises to the cytoplasm. The catalysed reaction is tRNA(Leu) + L-leucine + ATP = L-leucyl-tRNA(Leu) + AMP + diphosphate. The sequence is that of Leucine--tRNA ligase from Shewanella pealeana (strain ATCC 700345 / ANG-SQ1).